The sequence spans 193 residues: ATP synthase subunit b 1 (193 aa).

The segment at 9–28 (QEADHTAGETHTETGVAEGG) is disordered. Basic and acidic residues predominate over residues 10–20 (EADHTAGETHT). A helical transmembrane segment spans residues 40–59 (TYPSQLLWLAITFGLFYLFL).

This sequence belongs to the ATPase B chain family. In terms of assembly, F-type ATPases have 2 components, F(1) - the catalytic core - and F(0) - the membrane proton channel. F(1) has five subunits: alpha(3), beta(3), gamma(1), delta(1), epsilon(1). F(0) has three main subunits: a(1), b(2) and c(10-14). The alpha and beta chains form an alternating ring which encloses part of the gamma chain. F(1) is attached to F(0) by a central stalk formed by the gamma and epsilon chains, while a peripheral stalk is formed by the delta and b chains.

It localises to the cell inner membrane. Its function is as follows. F(1)F(0) ATP synthase produces ATP from ADP in the presence of a proton or sodium gradient. F-type ATPases consist of two structural domains, F(1) containing the extramembraneous catalytic core and F(0) containing the membrane proton channel, linked together by a central stalk and a peripheral stalk. During catalysis, ATP synthesis in the catalytic domain of F(1) is coupled via a rotary mechanism of the central stalk subunits to proton translocation. In terms of biological role, component of the F(0) channel, it forms part of the peripheral stalk, linking F(1) to F(0). In Chelativorans sp. (strain BNC1), this protein is ATP synthase subunit b 1.